The primary structure comprises 659 residues: MQTDEPTGTATSAIRIPPLISLRTTLMVAGLLGNVVAVAAYGLFSRTERYGAVGNPDPGSFIGVAEPVGYFGASLSSALCLGALIYFVMMVWPQADGLIDAQAFRIHLAEERVSIGWLAFALTMVVVQAANDSGVTPAELRTGAALFNAITTSETSRAWIVVTICALLVTLTLRVIIRYSDHFVLLIPAVIGVIATAVTGNAGQGPDHDYATSAVIVFALAIAALSGLKITAALTEVTPSRAVLIVQVVCGVLALAYGAELVYLLSPGAAMIDSDFGRLGLVAGVLVTLVCFSDCWALVMGRPHSDHRTRLTALAMMAVTAATAAMSVQTAPRFLTHRFTAWDVFLGYELPQPPNIVRFFTVWRFDSLIGATAIVLGIGYVAGFVRVRRAGNTWPVGRLVAWLTGCVALVFTSSSGVRTYGSAMFSVHMAEHMTLNMFIPVLLVLGGPVTLALRALSAAGDGQQPGPREWLTWLMHSSVTAFLSHPVTNFILFVGSPYIVYFTPLFDTLVRYHWGHEFMAIHFLLVGYIFYWAIIGIDPGPRRLPYLARIGLLFAVMPFHAFFGIALMTMTSAISAEFYRSVNLPWLASIDADQHIGGAIAWSATELPVIIVIVALMAQWARQDHRVAVREDRHADSTYADDDLNAYNAMLRELSRMRR.

Helical transmembrane passes span 24 to 44, 71 to 91, 115 to 135, 157 to 177, 183 to 203, 214 to 234, 242 to 262, 279 to 299, 311 to 331, 365 to 385, 393 to 413, 433 to 453, 490 to 510, 517 to 537, 550 to 570, and 596 to 616; these read TTLM…YGLF, FGAS…VMMV, IGWL…DSGV, RAWI…RVII, FVLL…GNAG, AVIV…TAAL, AVLI…AELV, LGLV…WALV, LTAL…VQTA, FDSL…AGFV, TWPV…VFTS, MTLN…TLAL, FILF…DTLV, EFMA…IIGI, IGLL…LMTM, and IGGA…IVAL.

To M.tuberculosis Rv0102.

The protein localises to the cell membrane. This is an uncharacterized protein from Mycobacterium leprae (strain TN).